Here is a 341-residue protein sequence, read N- to C-terminus: Ketol-acid reductoisomerase (NADP(+)) (341 aa).

Residues 2 to 181 enclose the KARI N-terminal Rossmann domain; that stretch reads AKVYYNGDAN…GAARAGVLET (180 aa). NADP(+) contacts are provided by residues 25-28, Arg-48, Ser-52, and 82-85; these read YGSQ and DEKQ. His-107 is a catalytic residue. Position 133 (Gly-133) interacts with NADP(+). The KARI C-terminal knotted domain occupies 182 to 327; that stretch reads TFKEETETDL…RELRSMMPFV (146 aa). Residues Asp-190, Glu-194, Glu-226, and Glu-230 each contribute to the Mg(2+) site. A substrate-binding site is contributed by Ser-251.

It belongs to the ketol-acid reductoisomerase family. The cofactor is Mg(2+).

It carries out the reaction (2R)-2,3-dihydroxy-3-methylbutanoate + NADP(+) = (2S)-2-acetolactate + NADPH + H(+). The enzyme catalyses (2R,3R)-2,3-dihydroxy-3-methylpentanoate + NADP(+) = (S)-2-ethyl-2-hydroxy-3-oxobutanoate + NADPH + H(+). It participates in amino-acid biosynthesis; L-isoleucine biosynthesis; L-isoleucine from 2-oxobutanoate: step 2/4. Its pathway is amino-acid biosynthesis; L-valine biosynthesis; L-valine from pyruvate: step 2/4. In terms of biological role, involved in the biosynthesis of branched-chain amino acids (BCAA). Catalyzes an alkyl-migration followed by a ketol-acid reduction of (S)-2-acetolactate (S2AL) to yield (R)-2,3-dihydroxy-isovalerate. In the isomerase reaction, S2AL is rearranged via a Mg-dependent methyl migration to produce 3-hydroxy-3-methyl-2-ketobutyrate (HMKB). In the reductase reaction, this 2-ketoacid undergoes a metal-dependent reduction by NADPH to yield (R)-2,3-dihydroxy-isovalerate. The sequence is that of Ketol-acid reductoisomerase (NADP(+)) from Geobacillus thermodenitrificans (strain NG80-2).